Consider the following 122-residue polypeptide: Large ribosomal subunit protein uL14 (122 aa).

The protein belongs to the universal ribosomal protein uL14 family. Part of the 50S ribosomal subunit. Forms a cluster with proteins L3 and L19. In the 70S ribosome, L14 and L19 interact and together make contacts with the 16S rRNA in bridges B5 and B8.

Binds to 23S rRNA. Forms part of two intersubunit bridges in the 70S ribosome. In Borreliella burgdorferi (strain ATCC 35210 / DSM 4680 / CIP 102532 / B31) (Borrelia burgdorferi), this protein is Large ribosomal subunit protein uL14.